The sequence spans 205 residues: LexA repressor (205 aa).

A DNA-binding region (H-T-H motif) is located at residues 28 to 48 (RAELMRAFDFRSPNAAESHLR). Catalysis depends on for autocatalytic cleavage activity residues Ser120 and Lys159.

This sequence belongs to the peptidase S24 family. As to quaternary structure, homodimer.

It catalyses the reaction Hydrolysis of Ala-|-Gly bond in repressor LexA.. Its function is as follows. Represses a number of genes involved in the response to DNA damage (SOS response), including recA and lexA. In the presence of single-stranded DNA, RecA interacts with LexA causing an autocatalytic cleavage which disrupts the DNA-binding part of LexA, leading to derepression of the SOS regulon and eventually DNA repair. The sequence is that of LexA repressor from Acidithiobacillus ferrooxidans (strain ATCC 23270 / DSM 14882 / CIP 104768 / NCIMB 8455) (Ferrobacillus ferrooxidans (strain ATCC 23270)).